The primary structure comprises 166 residues: MKILVSKKITLDLFCKNPIQIIEKEKNEIISISKNKKTVFYVIQPKALKKLFDIKEYFVKSKITKKEKKIIEKFPMHTNWIPDKDFIQKAALWGISLNEEVSKYELASFISYWEAEGLFFHHIQWQQKLARSLERSRSMNNAIQQKKDITYIPVPDQKTPDGFRGK.

The protein belongs to the DnaT family. As to quaternary structure, homooligomerizes. Interacts with PriB. Component of the replication restart primosome. Primosome assembly occurs via a 'hand-off' mechanism. PriA binds to replication forks, subsequently PriB then DnaT bind; DnaT then displaces ssDNA to generate the helicase loading substrate.

Functionally, involved in the restart of stalled replication forks, which reloads the replicative helicase on sites other than the origin of replication. Can function in multiple replication restart pathways. Displaces ssDNA from a PriB-ssDNA complex. Probably forms a spiral filament on ssDNA. This chain is Replication restart protein DnaT, found in Buchnera aphidicola subsp. Schizaphis graminum (strain Sg).